Reading from the N-terminus, the 160-residue chain is ATP synthase subunit b 3 (160 aa).

Residues 5 to 25 (PTFWVLVAFVLFVAAVWRIAA) form a helical membrane-spanning segment.

Belongs to the ATPase B chain family. In terms of assembly, F-type ATPases have 2 components, F(1) - the catalytic core - and F(0) - the membrane proton channel. F(1) has five subunits: alpha(3), beta(3), gamma(1), delta(1), epsilon(1). F(0) has three main subunits: a(1), b(2) and c(10-14). The alpha and beta chains form an alternating ring which encloses part of the gamma chain. F(1) is attached to F(0) by a central stalk formed by the gamma and epsilon chains, while a peripheral stalk is formed by the delta and b chains.

The protein localises to the cell inner membrane. In terms of biological role, f(1)F(0) ATP synthase produces ATP from ADP in the presence of a proton or sodium gradient. F-type ATPases consist of two structural domains, F(1) containing the extramembraneous catalytic core and F(0) containing the membrane proton channel, linked together by a central stalk and a peripheral stalk. During catalysis, ATP synthesis in the catalytic domain of F(1) is coupled via a rotary mechanism of the central stalk subunits to proton translocation. Its function is as follows. Component of the F(0) channel, it forms part of the peripheral stalk, linking F(1) to F(0). This is ATP synthase subunit b 3 from Rhodospirillum centenum (strain ATCC 51521 / SW).